The sequence spans 311 residues: Geranylgeranyl transferase type-2 subunit beta (311 aa).

PFTB repeat units lie at residues 54–95, 102–143, 150–191, 197–239, and 246–288; these read KERI…AMLD, KDKV…AILG, KNTA…KILN, DEEL…AIIG, and RNQL…SLLQ. Geranylgeranyl diphosphate-binding positions include 176 to 178 and 218 to 230; these read HGA and RPEKLPDSCYGWW. Residues aspartate 224, cysteine 226, and histidine 276 each contribute to the Zn(2+) site.

Belongs to the protein prenyltransferase subunit beta family. As to quaternary structure, heterodimer of an alpha and a beta subunit. Zn(2+) is required as a cofactor.

The catalysed reaction is geranylgeranyl diphosphate + L-cysteinyl-[protein] = S-geranylgeranyl-L-cysteinyl-[protein] + diphosphate. Catalyzes the transfer of a geranyl-geranyl moiety from geranyl-geranyl pyrophosphate to proteins having the C-terminal -XCC or -XCXC, where both cysteines may become modified. In Schizosaccharomyces pombe (strain 972 / ATCC 24843) (Fission yeast), this protein is Geranylgeranyl transferase type-2 subunit beta (ptb1).